Consider the following 472-residue polypeptide: Adenosylhomocysteinase (472 aa).

Substrate is bound by residues Thr-60, Asp-136, and Glu-197. 198-200 (TTT) serves as a coordination point for NAD(+). Lys-227 and Asp-231 together coordinate substrate. Residues Asn-232, 261-266 (GYGDVG), Glu-284, Asn-319, 340-342 (IGH), and Asn-388 contribute to the NAD(+) site.

Belongs to the adenosylhomocysteinase family. Requires NAD(+) as cofactor.

It localises to the cytoplasm. It catalyses the reaction S-adenosyl-L-homocysteine + H2O = L-homocysteine + adenosine. Its pathway is amino-acid biosynthesis; L-homocysteine biosynthesis; L-homocysteine from S-adenosyl-L-homocysteine: step 1/1. Functionally, may play a key role in the regulation of the intracellular concentration of adenosylhomocysteine. The sequence is that of Adenosylhomocysteinase from Maridesulfovibrio salexigens (strain ATCC 14822 / DSM 2638 / NCIMB 8403 / VKM B-1763) (Desulfovibrio salexigens).